The following is a 283-amino-acid chain: Elongation factor Ts (283 aa).

An involved in Mg(2+) ion dislocation from EF-Tu region spans residues 80 to 83 (TDFV).

Belongs to the EF-Ts family.

Its subcellular location is the cytoplasm. Functionally, associates with the EF-Tu.GDP complex and induces the exchange of GDP to GTP. It remains bound to the aminoacyl-tRNA.EF-Tu.GTP complex up to the GTP hydrolysis stage on the ribosome. The sequence is that of Elongation factor Ts from Serratia proteamaculans (strain 568).